Consider the following 425-residue polypeptide: Alpha-muurolene synthase (425 aa).

Residues D97, D101, N240, S244, and E248 each coordinate Mg(2+). The DDXXD motif signature appears at 97 to 101 (DNISD). Residues 348-382 (VAPPPPPPPPTPPPQSSDADTKKQKVKAQDGKGPV) form a disordered region. Residues 349-362 (APPPPPPPPTPPPQ) show a composition bias toward pro residues. The segment covering 366-377 (ADTKKQKVKAQD) has biased composition (basic and acidic residues).

Belongs to the terpene synthase family. It depends on Mg(2+) as a cofactor.

The enzyme catalyses (2E,6E)-farnesyl diphosphate = alpha-muurolene + diphosphate. The catalysed reaction is (2E,6E)-farnesyl diphosphate = gamma-muurolene + diphosphate. It carries out the reaction (2E,6E)-farnesyl diphosphate = (+)-(R)-germacrene A + diphosphate. Sesquiterpene synthase that catalyzes the formation of alpha-muurolene, and at lower level (+)-(R)-germacrene A and gamma-muurolene. In Coprinopsis cinerea (strain Okayama-7 / 130 / ATCC MYA-4618 / FGSC 9003) (Inky cap fungus), this protein is Alpha-muurolene synthase (COP3).